A 283-amino-acid polypeptide reads, in one-letter code: NAD(P)H-hydrate epimerase (283 aa).

Residues 1–28 (MLGVRALFGIGLLVTSRGGFVLTHTRAC) constitute a mitochondrion transit peptide. Residues 61-270 (AQQIDEELFS…VLEQKYQLNL (210 aa)) enclose the YjeF N-terminal domain. (6S)-NADPHX is bound at residue 115–119 (NNGGD). Positions 116 and 180 each coordinate K(+). Residues 184–190 (GFSFKGA) and D213 contribute to the (6S)-NADPHX site. S216 is a binding site for K(+).

The protein belongs to the NnrE/AIBP family. Homodimer. Interacts with apoa1a. Binds to high-density lipoprotein. The cofactor is K(+).

The protein resides in the mitochondrion. The protein localises to the secreted. It catalyses the reaction (6R)-NADHX = (6S)-NADHX. The catalysed reaction is (6R)-NADPHX = (6S)-NADPHX. In terms of biological role, catalyzes the epimerization of the S- and R-forms of NAD(P)HX, a damaged form of NAD(P)H that is a result of enzymatic or heat-dependent hydration. This is a prerequisite for the S-specific NAD(P)H-hydrate dehydratase to allow the repair of both epimers of NAD(P)HX. The polypeptide is NAD(P)H-hydrate epimerase (Danio rerio (Zebrafish)).